An 892-amino-acid chain; its full sequence is Putative ubiquitin carboxyl-terminal hydrolase 11 (892 aa).

One can recognise a DUSP domain in the interval 17 to 132 (YTPEEERRIV…GGPPVPRKLI (116 aa)). The tract at residues 69–89 (EPSEVTRPGPIDNHDIIDSES) is disordered. The 580-residue stretch at 301 to 880 (GGLQNLGNTC…AAYVLFYQRV (580 aa)) folds into the USP domain. The active-site Nucleophile is the Cys-310. Residues 636–660 (NSGNENGHVPDESSRSILSRDTETE) are disordered. The segment covering 643–657 (HVPDESSRSILSRDT) has biased composition (basic and acidic residues). The Proton acceptor role is filled by His-838.

The protein belongs to the peptidase C19 family.

It carries out the reaction Thiol-dependent hydrolysis of ester, thioester, amide, peptide and isopeptide bonds formed by the C-terminal Gly of ubiquitin (a 76-residue protein attached to proteins as an intracellular targeting signal).. Recognizes and hydrolyzes the peptide bond at the C-terminal Gly of ubiquitin. Involved in the processing of poly-ubiquitin precursors as well as that of ubiquitinated proteins. This is Putative ubiquitin carboxyl-terminal hydrolase 11 (UBP11) from Arabidopsis thaliana (Mouse-ear cress).